Here is a 481-residue protein sequence, read N- to C-terminus: RAC-beta serine/threonine-protein kinase (481 aa).

Residue methionine 1 is modified to N-acetylmethionine. Residues 5-108 (SVIKEGWLHK…WMRAIQMVAN (104 aa)) form the PH domain. Serine 34 is subject to Phosphoserine. The cysteines at positions 60 and 77 are disulfide-linked. Serine 126 bears the Phosphoserine mark. Serine 128 and serine 131 each carry an O-linked (GlcNAc) serine glycan. One can recognise a Protein kinase domain in the interval 152-409 (FDYLKLLGKG…AKEVMEHRFF (258 aa)). ATP-binding positions include 158–166 (LGKGTFGKV) and lysine 181. Aspartate 275 functions as the Proton acceptor in the catalytic mechanism. Asparagine 280 and aspartate 293 together coordinate Mn(2+). Cysteine 297 and cysteine 311 form a disulfide bridge. A glycan (O-linked (GlcNAc) threonine) is linked at threonine 306. The residue at position 309 (threonine 309) is a Phosphothreonine; by PDPK1. Threonine 313 is a glycosylation site (O-linked (GlcNAc) threonine). The 72-residue stretch at 410-481 (LSINWQDVVQ…QFSYSASIRE (72 aa)) folds into the AGC-kinase C-terminal domain. A Phosphoserine modification is found at serine 447. Threonine 451 is modified (phosphothreonine). Residues serine 474 and serine 478 each carry the phosphoserine; by MTOR modification. An O-linked (GlcNAc) serine; alternate glycan is attached at serine 474.

The protein belongs to the protein kinase superfamily. AGC Ser/Thr protein kinase family. RAC subfamily. Interacts with BTBD10. Interacts with KCTD20. Interacts (via PH domain) with MTCP1, TCL1A and TCL1B; this interaction may facilitate AKT2 oligomerization and phosphorylation, hence increasing kinase activity. Interacts with PHB2; this interaction may be important for myogenic differentiation. Interacts (when phosphorylated) with CLIP3/ClipR-59; this interaction promotes cell membrane localization. Interacts with WDFY2 (via WD repeats 1-3). Post-translationally, phosphorylation on Thr-309 and Ser-474 is required for full activity. Phosphorylation of the activation loop at Thr-309 by PDPK1/PDK1 is a prerequisite for full activation. Phosphorylated and activated by PDPK1/PDK1 in the presence of phosphatidylinositol 3,4,5-trisphosphate. Phosphorylation by mTORC2 in response to growth factors plays a key role in AKT1 activation: mTORC2 phosphorylates different sites depending on the context, such as Ser-474 or Ser-478, thereby facilitating subsequent phosphorylation of the activation loop by PDPK1/PDK1. In terms of processing, ubiquitinated; undergoes both 'Lys-48'- and 'Lys-63'-linked polyubiquitination. TRAF6-induced 'Lys-63'-linked AKT2 ubiquitination. When fully phosphorylated and translocated into the nucleus, undergoes 'Lys-48'-polyubiquitination catalyzed by TTC3, leading to its degradation by the proteasome. O-GlcNAcylation at Thr-306 and Thr-313 inhibits activating phosphorylation at Thr-309 via disrupting the interaction between AKT and PDPK1/PDK1.

The protein localises to the cytoplasm. Its subcellular location is the nucleus. It localises to the cell membrane. It is found in the early endosome. The catalysed reaction is L-seryl-[protein] + ATP = O-phospho-L-seryl-[protein] + ADP + H(+). The enzyme catalyses L-threonyl-[protein] + ATP = O-phospho-L-threonyl-[protein] + ADP + H(+). With respect to regulation, two specific sites, one in the kinase domain (Thr-309) and the other in the C-terminal regulatory region (Ser-474), need to be phosphorylated for its full activation. AKT2 phosphorylation of PKP1 is induced by insulin. Inhibited by Akt inhibitor MK2206. Its function is as follows. AKT2 is one of 3 closely related serine/threonine-protein kinases (AKT1, AKT2 and AKT3) called the AKT kinases, and which regulate many processes including metabolism, proliferation, cell survival, growth and angiogenesis. This is mediated through serine and/or threonine phosphorylation of a range of downstream substrates. Over 100 substrate candidates have been reported so far, but for most of them, no isoform specificity has been reported. AKT is responsible of the regulation of glucose uptake by mediating insulin-induced translocation of the SLC2A4/GLUT4 glucose transporter to the cell surface. Phosphorylation of PTPN1 at 'Ser-50' negatively modulates its phosphatase activity preventing dephosphorylation of the insulin receptor and the attenuation of insulin signaling. Phosphorylation of TBC1D4 triggers the binding of this effector to inhibitory 14-3-3 proteins, which is required for insulin-stimulated glucose transport. AKT also regulates the storage of glucose in the form of glycogen by phosphorylating GSK3A at 'Ser-21' and GSK3B at 'Ser-9', resulting in inhibition of its kinase activity. Phosphorylation of GSK3 isoforms by AKT is also thought to be one mechanism by which cell proliferation is driven. AKT also regulates cell survival via the phosphorylation of MAP3K5 (apoptosis signal-related kinase). Phosphorylation of 'Ser-83' decreases MAP3K5 kinase activity stimulated by oxidative stress and thereby prevents apoptosis. AKT mediates insulin-stimulated protein synthesis by phosphorylating TSC2 at 'Ser-939' and 'Thr-1462', thereby activating mTORC1 signaling and leading to both phosphorylation of 4E-BP1 and in activation of RPS6KB1. AKT is involved in the phosphorylation of members of the FOXO factors (Forkhead family of transcription factors), leading to binding of 14-3-3 proteins and cytoplasmic localization. In particular, FOXO1 is phosphorylated at 'Thr-24', 'Ser-256' and 'Ser-319'. FOXO3 and FOXO4 are phosphorylated on equivalent sites. AKT has an important role in the regulation of NF-kappa-B-dependent gene transcription and positively regulates the activity of CREB1 (cyclic AMP (cAMP)-response element binding protein). The phosphorylation of CREB1 induces the binding of accessory proteins that are necessary for the transcription of pro-survival genes such as BCL2 and MCL1. AKT phosphorylates 'Ser-454' on ATP citrate lyase (ACLY), thereby potentially regulating ACLY activity and fatty acid synthesis. Activates the 3B isoform of cyclic nucleotide phosphodiesterase (PDE3B) via phosphorylation of 'Ser-273', resulting in reduced cyclic AMP levels and inhibition of lipolysis. Phosphorylates PIKFYVE on 'Ser-318', which results in increased PI(3)P-5 activity. The Rho GTPase-activating protein DLC1 is another substrate and its phosphorylation is implicated in the regulation cell proliferation and cell growth. AKT plays a role as key modulator of the AKT-mTOR signaling pathway controlling the tempo of the process of newborn neurons integration during adult neurogenesis, including correct neuron positioning, dendritic development and synapse formation. Signals downstream of phosphatidylinositol 3-kinase (PI(3)K) to mediate the effects of various growth factors such as platelet-derived growth factor (PDGF), epidermal growth factor (EGF), insulin and insulin-like growth factor I (IGF-I). AKT mediates the antiapoptotic effects of IGF-I. Essential for the SPATA13-mediated regulation of cell migration and adhesion assembly and disassembly. May be involved in the regulation of the placental development. In response to lysophosphatidic acid stimulation, inhibits the ciliogenesis cascade. In this context, phosphorylates WDR44, hence stabilizing its interaction with Rab11 and preventing the formation of the ciliogenic Rab11-FIP3-RAB3IP complex. Also phosphorylates RAB3IP/Rabin8, thus may affect RAB3IP guanine nucleotide exchange factor (GEF) activity toward Rab8, which is important for cilia growth. Phosphorylates PKP1, facilitating its interaction with YWHAG and translocation to the nucleus, ultimately resulting in a reduction in keratinocyte intercellular adhesion. Phosphorylation of PKP1 increases PKP1 protein stability, translocation to the cytoplasm away from desmosome plaques and PKP1-driven cap-dependent translation. In terms of biological role, several AKT2-specific substrates have been identified, including ANKRD2, C2CD5, CLK2 and PITX2. May play a role in myoblast differentiation. In this context, may act through PITX2 phosphorylation. Unphosphorylated PITX2 associates with an ELAVL1/HuR-containing complex, which stabilizes cyclin mRNA and ensuring cell proliferation. Phosphorylation by AKT2 impairs this association, leading to CCND1 mRNA destabilization and progression towards differentiation. Also involved in the negative regulation of myogenesis in response to stress conditions. In this context, acts by phosphorylating ANKRD2. May also be a key regulator of glucose uptake. Regulates insulin-stimulated glucose transport by the increase of glucose transporter GLUT4 translocation from intracellular stores to the plasma membrane. In this context, acts by phosphorylating C2CD5/CDP138 on 'Ser-197' in insulin-stimulated adipocytes. Through the phosphorylation of CLK2 on 'Thr-343', involved in insulin-regulated suppression of hepatic gluconeogenesis. The polypeptide is RAC-beta serine/threonine-protein kinase (Akt2) (Mus musculus (Mouse)).